The primary structure comprises 333 residues: MTRNEYIKSFNSVIDDKAIPMFGQNSVLSIINQWLNSVDASIVSSTKFIHEIRKISSRVDKDVIKKTFKESRLLSYLVNRDILGNFGKEIKRTKDVVGYNWFGDVNSYHLNNKEDPENIFTRRWISNFRLFKKQILKSASKLCYGDYRQIHPLASDMIIIKEYELDKNKVSIFVNYGFFTPETNQKNINKFFSIASTITRQLETALLCMETVENIHTYPFKNICGWEGYKLVISLREVKCAYSPTSKEIYQQKCDEIVNTPKEETTLEELMECLDDSPEPIEIRPEVIALEKAYKEVLEISNKAQKEYEQAKKIWEESVNRLDRLEQALQLIK.

This is an uncharacterized protein from Escherichia coli (Bacteriophage T4).